The primary structure comprises 665 residues: Coiled-coil domain-containing protein 138 (665 aa).

Threonine 48 bears the Phosphothreonine mark. Serine 49 carries the phosphoserine modification. A coiled-coil region spans residues 198–323; that stretch reads QQKFAEELQK…YEFMTIQRLK (126 aa). Serine 469 is modified (phosphoserine).

This is Coiled-coil domain-containing protein 138 (CCDC138) from Macaca fascicularis (Crab-eating macaque).